Consider the following 72-residue polypeptide: Translation initiation factor IF-1 (72 aa).

The S1-like domain maps to 1–72; sequence MAKEDVIEVE…NRGRIIYRFK (72 aa).

Belongs to the IF-1 family. Component of the 30S ribosomal translation pre-initiation complex which assembles on the 30S ribosome in the order IF-2 and IF-3, IF-1 and N-formylmethionyl-tRNA(fMet); mRNA recruitment can occur at any time during PIC assembly.

The protein resides in the cytoplasm. In terms of biological role, one of the essential components for the initiation of protein synthesis. Stabilizes the binding of IF-2 and IF-3 on the 30S subunit to which N-formylmethionyl-tRNA(fMet) subsequently binds. Helps modulate mRNA selection, yielding the 30S pre-initiation complex (PIC). Upon addition of the 50S ribosomal subunit IF-1, IF-2 and IF-3 are released leaving the mature 70S translation initiation complex. The chain is Translation initiation factor IF-1 from Syntrophomonas wolfei subsp. wolfei (strain DSM 2245B / Goettingen).